Here is a 234-residue protein sequence, read N- to C-terminus: Large ribosomal subunit protein uL1 (234 aa).

Belongs to the universal ribosomal protein uL1 family. As to quaternary structure, part of the 50S ribosomal subunit.

In terms of biological role, binds directly to 23S rRNA. The L1 stalk is quite mobile in the ribosome, and is involved in E site tRNA release. Protein L1 is also a translational repressor protein, it controls the translation of the L11 operon by binding to its mRNA. This is Large ribosomal subunit protein uL1 from Baumannia cicadellinicola subsp. Homalodisca coagulata.